We begin with the raw amino-acid sequence, 245 residues long: UPF0246 protein Cgl1995/cg2186 (245 aa).

The protein belongs to the UPF0246 family.

The chain is UPF0246 protein Cgl1995/cg2186 from Corynebacterium glutamicum (strain ATCC 13032 / DSM 20300 / JCM 1318 / BCRC 11384 / CCUG 27702 / LMG 3730 / NBRC 12168 / NCIMB 10025 / NRRL B-2784 / 534).